We begin with the raw amino-acid sequence, 306 residues long: Small ribosomal subunit protein uS2 (306 aa).

Serine 2 carries the N-acetylserine modification. Laminin-binding stretches follow at residues 161-180 (IPCNNKGAHSVGLMWWMLAR) and 205-229 (RDPEEIEKEEQAAAEKATTKEEFQG). [DE]-W-[ST] repeat units lie at residues 230–232 (EWT), 245–247 (DWS), 276–278 (DWS), 286–288 (DWS), and 304–306 (EWS). The segment at 242–306 (EVADWSEGVQ…EWTGTTTEWS (65 aa)) is laminin-binding. The disordered stretch occupies residues 247–306 (SEGVQVPSVPIQQFTAERTDVPPAPKPTEDWSTQPASTDDWSAAPTAQASEWTGTTTEWS). Polar residues predominate over residues 276–306 (DWSTQPASTDDWSAAPTAQASEWTGTTTEWS).

This sequence belongs to the universal ribosomal protein uS2 family. Monomer (37LRP) and homodimer (67LR). Component of the small ribosomal subunit. Mature ribosomes consist of a small (40S) and a large (60S) subunit. The 40S subunit contains about 33 different proteins and 1 molecule of RNA (18S). The 60S subunit contains about 49 different proteins and 3 molecules of RNA (28S, 5.8S and 5S). Interacts with rps21. Interacts with several laminins including at least lamb1. Interacts with mdk. Acylated. Acylation may be a prerequisite for conversion of the monomeric 37 kDa laminin receptor precursor (37LRP) to the mature dimeric 67 kDa laminin receptor (67LR), and may provide a mechanism for membrane association. Post-translationally, cleaved by stromelysin-3 (ST3) at the cell surface. Cleavage by stromelysin-3 may be a mechanism to alter cell-extracellular matrix interactions.

Its subcellular location is the cell membrane. It localises to the cytoplasm. The protein resides in the nucleus. In terms of biological role, required for the assembly and/or stability of the 40S ribosomal subunit. Required for the processing of the 20S rRNA-precursor to mature 18S rRNA in a late step of the maturation of 40S ribosomal subunits. Also functions as a cell surface receptor for laminin. Plays a role in cell adhesion to the basement membrane and in the consequent activation of signaling transduction pathways. May play a role in cell fate determination and tissue morphogenesis. This chain is Small ribosomal subunit protein uS2 (rpsa), found in Xenopus laevis (African clawed frog).